We begin with the raw amino-acid sequence, 228 residues long: MPNWGQVMFQDAASSVMLQLVSFHDHALLVLTLVLTVVGYALLALMLNKQVNRYIMEAQTVETIWTILPALILLVLALPSLRILYITDEVSQPSITVKTIGHQWYWSYEYTDFLNVEMDSYMLPTSDLLPGDYRLLEVDNRMVVPMQLEIRMLITAADVIHSWTVPALGVKVDAVPGRLNQIGFTTTQPGVFYGQCSEICGANHSFMPIAVEAINTKSFMSWVSNFKP.

The Mitochondrial intermembrane portion of the chain corresponds to 1–26 (MPNWGQVMFQDAASSVMLQLVSFHDH). A helical membrane pass occupies residues 27–47 (ALLVLTLVLTVVGYALLALML). Topologically, residues 48–60 (NKQVNRYIMEAQT) are mitochondrial matrix. Residues 61-81 (VETIWTILPALILLVLALPSL) form a helical membrane-spanning segment. The Mitochondrial intermembrane portion of the chain corresponds to 82–228 (RILYITDEVS…FMSWVSNFKP (147 aa)). Cu cation is bound by residues His161, Cys196, Glu198, Cys200, His204, and Met207. Glu198 is a Mg(2+) binding site.

This sequence belongs to the cytochrome c oxidase subunit 2 family. As to quaternary structure, component of the cytochrome c oxidase (complex IV, CIV), a multisubunit enzyme composed of a catalytic core of 3 subunits and several supernumerary subunits. The complex exists as a monomer or a dimer and forms supercomplexes (SCs) in the inner mitochondrial membrane with ubiquinol-cytochrome c oxidoreductase (cytochrome b-c1 complex, complex III, CIII). It depends on Cu cation as a cofactor.

It is found in the mitochondrion inner membrane. The enzyme catalyses 4 Fe(II)-[cytochrome c] + O2 + 8 H(+)(in) = 4 Fe(III)-[cytochrome c] + 2 H2O + 4 H(+)(out). Component of the cytochrome c oxidase, the last enzyme in the mitochondrial electron transport chain which drives oxidative phosphorylation. The respiratory chain contains 3 multisubunit complexes succinate dehydrogenase (complex II, CII), ubiquinol-cytochrome c oxidoreductase (cytochrome b-c1 complex, complex III, CIII) and cytochrome c oxidase (complex IV, CIV), that cooperate to transfer electrons derived from NADH and succinate to molecular oxygen, creating an electrochemical gradient over the inner membrane that drives transmembrane transport and the ATP synthase. Cytochrome c oxidase is the component of the respiratory chain that catalyzes the reduction of oxygen to water. Electrons originating from reduced cytochrome c in the intermembrane space (IMS) are transferred via the dinuclear copper A center (CU(A)) of subunit 2 and heme A of subunit 1 to the active site in subunit 1, a binuclear center (BNC) formed by heme A3 and copper B (CU(B)). The BNC reduces molecular oxygen to 2 water molecules using 4 electrons from cytochrome c in the IMS and 4 protons from the mitochondrial matrix. This is Cytochrome c oxidase subunit 2 (COII) from Lumbricus terrestris (Common earthworm).